The chain runs to 512 residues: Probable malate:quinone oxidoreductase (512 aa).

It belongs to the MQO family. The cofactor is FAD.

The enzyme catalyses (S)-malate + a quinone = a quinol + oxaloacetate. It participates in carbohydrate metabolism; tricarboxylic acid cycle; oxaloacetate from (S)-malate (quinone route): step 1/1. This Rhodococcus erythropolis (strain PR4 / NBRC 100887) protein is Probable malate:quinone oxidoreductase.